The primary structure comprises 333 residues: Gap junction alpha-4 protein (333 aa).

Over 1-20 (MGDWGFLEKLLDQVQEHSTV) the chain is Cytoplasmic. A helical transmembrane segment spans residues 21–40 (VGKIWLTVLFIFRILILGLA). The Extracellular portion of the chain corresponds to 41–76 (GESVWGDEQSDFECNTAQPGCTNVCYDQAFPISHIR). The chain crosses the membrane as a helical span at residues 77-99 (YWVLQFLFVSTPTLVYLGHVIYL). Residues 100 to 148 (SRREERLRQKEGELRALPAKDPQVERALAAVERQMAKISVAEDGRLRIR) are Cytoplasmic-facing. A helical transmembrane segment spans residues 149 to 165 (GALMGTYVASVLCKSVL). At 166 to 207 (EAGFLYGQWRLYGWTMEPVFVCQRAPCPYLVDCFVSRPTEKT) the chain is on the extracellular side. The chain crosses the membrane as a helical span at residues 208-230 (IFIIFMLVVGLISLVLNLLELVH). At 231–333 (LLCRCLSRGM…SSSASKKQYV (103 aa)) the chain is on the cytoplasmic side. A disordered region spans residues 292–333 (ANLTTEERLASSRPPLFLDPPPQNGQKPPSRPSSSASKKQYV). Positions 323–333 (PSSSASKKQYV) are enriched in low complexity.

The protein belongs to the connexin family. Alpha-type (group II) subfamily. A connexon is composed of a hexamer of connexins. As to expression, expressed in multiple organs and tissues, including heart, uterus, ovary, and blood vessel endothelium.

The protein localises to the cell membrane. Its subcellular location is the cell junction. It is found in the gap junction. Its function is as follows. One gap junction consists of a cluster of closely packed pairs of transmembrane channels, the connexons, through which materials of low MW diffuse from one cell to a neighboring cell. The chain is Gap junction alpha-4 protein (GJA4) from Homo sapiens (Human).